The sequence spans 231 residues: MAEEKELVLLDFWVSPFGQRCRIAMAEKGLEFEYREEDLGNKSDLLLRSNPVHRKIPVLLHAGRPVSESLVILQYLDDAFPGTPHLLSPANSGDADAAYARATARFWADYVDRKLYDCGSRLWRLKGEPQAAAGREMAEILRTLEAELGDREFFGGGGGGRLGFVDVALVPFTAWFYSYERCGGFSVEEVAPRLAAWARRCGRIDSVAKHLPSPEKVYDFVGVLKKKYGVE.

The GST N-terminal domain occupies 5-84 (KELVLLDFWV…YLDDAFPGTP (80 aa)). Residues serine 15, lysine 42, isoleucine 56, and 68–69 (ES) each bind glutathione. One can recognise a GST C-terminal domain in the interval 97–220 (AAYARATARF…LPSPEKVYDF (124 aa)).

Belongs to the GST superfamily. Tau family.

It catalyses the reaction RX + glutathione = an S-substituted glutathione + a halide anion + H(+). Conjugation of reduced glutathione to a wide number of exogenous and endogenous hydrophobic electrophiles. This is Probable glutathione S-transferase GSTU1 (GSTU1) from Oryza sativa subsp. indica (Rice).